Consider the following 142-residue polypeptide: Fluoride-specific ion channel FluC 1 (142 aa).

4 helical membrane-spanning segments follow: residues 17 to 37 (AWVSAGSVVGGLTRYLVGLAL), 42 to 62 (GFPFATLFINATGSLIIGFYA), 80 to 100 (FVMTGFCGGYTTFSAFSLETF), and 109 to 129 (YIALAYVASSVVCWLVSVWLG). Na(+) contacts are provided by glycine 87 and threonine 90.

It belongs to the fluoride channel Fluc/FEX (TC 1.A.43) family.

The protein resides in the cell inner membrane. It catalyses the reaction fluoride(in) = fluoride(out). Its activity is regulated as follows. Na(+) is not transported, but it plays an essential structural role and its presence is essential for fluoride channel function. In terms of biological role, fluoride-specific ion channel. Important for reducing fluoride concentration in the cell, thus reducing its toxicity. The protein is Fluoride-specific ion channel FluC 1 of Bradyrhizobium diazoefficiens (strain JCM 10833 / BCRC 13528 / IAM 13628 / NBRC 14792 / USDA 110).